The sequence spans 462 residues: UDP-N-acetylmuramoylalanine--D-glutamate ligase (462 aa).

Residue 118 to 124 participates in ATP binding; it reads GTNGKST.

Belongs to the MurCDEF family.

The protein localises to the cytoplasm. The enzyme catalyses UDP-N-acetyl-alpha-D-muramoyl-L-alanine + D-glutamate + ATP = UDP-N-acetyl-alpha-D-muramoyl-L-alanyl-D-glutamate + ADP + phosphate + H(+). It participates in cell wall biogenesis; peptidoglycan biosynthesis. Its function is as follows. Cell wall formation. Catalyzes the addition of glutamate to the nucleotide precursor UDP-N-acetylmuramoyl-L-alanine (UMA). The sequence is that of UDP-N-acetylmuramoylalanine--D-glutamate ligase from Anaeromyxobacter dehalogenans (strain 2CP-C).